Consider the following 303-residue polypeptide: D-alanine--D-alanine ligase (303 aa).

Residues 104–300 (KLMWQAVGLP…FEKLVERVLE (197 aa)) enclose the ATP-grasp domain. An ATP-binding site is contributed by 132–187 (IAKLGLPVFVKPSSEGSSVGVTKVKTVEQLLPAVEEALKFDSIVLVEAFLAGKEYS). 3 residues coordinate Mg(2+): D254, E267, and N269.

It belongs to the D-alanine--D-alanine ligase family. Mg(2+) serves as cofactor. The cofactor is Mn(2+).

It is found in the cytoplasm. The catalysed reaction is 2 D-alanine + ATP = D-alanyl-D-alanine + ADP + phosphate + H(+). Its pathway is cell wall biogenesis; peptidoglycan biosynthesis. Its function is as follows. Cell wall formation. The polypeptide is D-alanine--D-alanine ligase (Actinobacillus pleuropneumoniae serotype 5b (strain L20)).